Here is a 569-residue protein sequence, read N- to C-terminus: Carboxylesterase 3 (569 aa).

An N-terminal signal peptide occupies residues 1 to 24; that stretch reads MRLHRLRARLNAVAFGLLLLLVHG. C95 and C122 form a disulfide bridge. N-linked (GlcNAc...) asparagine glycosylation is present at N103. S227 serves as the catalytic Acyl-ester intermediate. A disulfide bridge connects residues C279 and C290. Residues E345 and H458 each act as charge relay system in the active site. A Prevents secretion from ER motif is present at residues 566 to 569; sequence QEDL.

Belongs to the type-B carboxylesterase/lipase family. In terms of processing, N-glycosylated.

It localises to the endoplasmic reticulum lumen. The enzyme catalyses a carboxylic ester + H2O = an alcohol + a carboxylate + H(+). Functionally, involved in the detoxification of xenobiotics and in the activation of ester and amide prodrugs. This chain is Carboxylesterase 3 (CES3), found in Pongo abelii (Sumatran orangutan).